A 246-amino-acid polypeptide reads, in one-letter code: NAD(P)H-hydrate epimerase (246 aa).

The 223-residue stretch at 12 to 234 folds into the YjeF N-terminal domain; the sequence is AAEIDKELMG…DFANKFGFEP (223 aa). 69–73 provides a ligand contact to (6S)-NADPHX; the sequence is NNGGD. The K(+) site is built by Asn-70 and Asp-138. Residues 142–148 and Asp-173 contribute to the (6S)-NADPHX site; that span reads GFSFKPP. Residue Thr-176 participates in K(+) binding.

The protein belongs to the NnrE/AIBP family. The cofactor is K(+).

It localises to the cytoplasm. Its subcellular location is the mitochondrion. The enzyme catalyses (6R)-NADHX = (6S)-NADHX. It carries out the reaction (6R)-NADPHX = (6S)-NADPHX. Catalyzes the epimerization of the S- and R-forms of NAD(P)HX, a damaged form of NAD(P)H that is a result of enzymatic or heat-dependent hydration. This is a prerequisite for the S-specific NAD(P)H-hydrate dehydratase to allow the repair of both epimers of NAD(P)HX. In Saccharomyces cerevisiae (strain ATCC 204508 / S288c) (Baker's yeast), this protein is NAD(P)H-hydrate epimerase.